The primary structure comprises 445 residues: tRNA-2-methylthio-N(6)-dimethylallyladenosine synthase (445 aa).

Positions lysine 2–histidine 119 constitute an MTTase N-terminal domain. Positions 11, 48, 82, 156, 160, and 163 each coordinate [4Fe-4S] cluster. In terms of domain architecture, Radical SAM core spans arginine 142–serine 378. In terms of domain architecture, TRAM spans glutamine 379–threonine 442.

It belongs to the methylthiotransferase family. MiaB subfamily. As to quaternary structure, monomer. Requires [4Fe-4S] cluster as cofactor.

Its subcellular location is the cytoplasm. It catalyses the reaction N(6)-dimethylallyladenosine(37) in tRNA + (sulfur carrier)-SH + AH2 + 2 S-adenosyl-L-methionine = 2-methylsulfanyl-N(6)-dimethylallyladenosine(37) in tRNA + (sulfur carrier)-H + 5'-deoxyadenosine + L-methionine + A + S-adenosyl-L-homocysteine + 2 H(+). In terms of biological role, catalyzes the methylthiolation of N6-(dimethylallyl)adenosine (i(6)A), leading to the formation of 2-methylthio-N6-(dimethylallyl)adenosine (ms(2)i(6)A) at position 37 in tRNAs that read codons beginning with uridine. The polypeptide is tRNA-2-methylthio-N(6)-dimethylallyladenosine synthase (Aromatoleum aromaticum (strain DSM 19018 / LMG 30748 / EbN1) (Azoarcus sp. (strain EbN1))).